The sequence spans 163 residues: Jun dimerization protein 2 (163 aa).

Disordered stretches follow at residues Met1 to Gly20 and Gly58 to Cys89. Residue Lys65 forms a Glycyl lysine isopeptide (Lys-Gly) (interchain with G-Cter in SUMO2) linkage. In terms of domain architecture, bZIP spans Glu72–His135. The tract at residues Arg74–Arg96 is basic motif. A leucine-zipper region spans residues Leu100–Leu128. Thr148 is modified (phosphothreonine; by MAPK8).

Belongs to the bZIP family. ATF subfamily. In terms of assembly, forms a homodimer or heterodimer with JUN, JUNB, JUND, CEBPG and ATF2 thereby inhibiting transactivation by JUN, ATF2 and CEBPG. Binds multiple DNA elements such as cAMP-response element (CRE) and TPA response element (TRE) either as homodimer or heterodimer. Interacts with IRF2BP1. Post-translationally, phosphorylation of Thr-148 by MAPK8 in response to different stress conditions such as, UV irradiation, oxidatives stress and anisomycin treatments. In terms of processing, polyubiquitinated; probably by IRF2BP1.

The protein resides in the nucleus. Its function is as follows. Component of the AP-1 transcription factor that represses transactivation mediated by the Jun family of proteins. Involved in a variety of transcriptional responses associated with AP-1 such as UV-induced apoptosis, cell differentiation, tumorigenesis and antitumogeneris. Can also function as a repressor by recruiting histone deacetylase 3/HDAC3 to the promoter region of JUN. May control transcription via direct regulation of the modification of histones and the assembly of chromatin. The protein is Jun dimerization protein 2 (JDP2) of Homo sapiens (Human).